The chain runs to 199 residues: Probable adenylyl-sulfate kinase (199 aa).

34–41 (GLSGSGKS) is an ATP binding site. S108 acts as the Phosphoserine intermediate in catalysis.

This sequence belongs to the APS kinase family.

The catalysed reaction is adenosine 5'-phosphosulfate + ATP = 3'-phosphoadenylyl sulfate + ADP + H(+). Its pathway is sulfur metabolism; hydrogen sulfide biosynthesis; sulfite from sulfate: step 2/3. In terms of biological role, catalyzes the synthesis of activated sulfate. This is Probable adenylyl-sulfate kinase (yisZ) from Bacillus subtilis (strain 168).